We begin with the raw amino-acid sequence, 395 residues long: Acetate kinase (395 aa).

Mg(2+) is bound at residue N7. K14 is a binding site for ATP. R90 lines the substrate pocket. D147 acts as the Proton donor/acceptor in catalysis. Residues 207-211, 282-284, and 330-334 contribute to the ATP site; these read HLGNG, DFR, and GLGEN. E383 is a Mg(2+) binding site.

It belongs to the acetokinase family. Homodimer. Mg(2+) serves as cofactor. Mn(2+) is required as a cofactor.

The protein resides in the cytoplasm. It carries out the reaction acetate + ATP = acetyl phosphate + ADP. The protein operates within metabolic intermediate biosynthesis; acetyl-CoA biosynthesis; acetyl-CoA from acetate: step 1/2. Functionally, catalyzes the formation of acetyl phosphate from acetate and ATP. Can also catalyze the reverse reaction. This chain is Acetate kinase, found in Lachnoclostridium phytofermentans (strain ATCC 700394 / DSM 18823 / ISDg) (Clostridium phytofermentans).